The chain runs to 453 residues: Iron-sulfur cluster assembly SufBD family protein slr0076 (453 aa).

This sequence belongs to the iron-sulfur cluster assembly SufBD family.

The protein is Iron-sulfur cluster assembly SufBD family protein slr0076 of Synechocystis sp. (strain ATCC 27184 / PCC 6803 / Kazusa).